The primary structure comprises 202 residues: METIVLGVAPREIKKNAAGKLRKTGEVPAVVYHKGEATIAVSVNEIALNKLVHSAESHIIDLKFPDGNVKRSFIKDVQFDPVTDRVIHTDFQLVSANEVIEMDVPVAVEGDAIGVEKGGKLQIIRHSLTVKGKPGDMPAHVTIDVTALEIGHSIHVREIPATAFPGLEIMDDRDTPVVTVLASKKEAEATEAVAGATPEGAA.

Belongs to the bacterial ribosomal protein bL25 family. CTC subfamily. In terms of assembly, part of the 50S ribosomal subunit; part of the 5S rRNA/L5/L18/L25 subcomplex. Contacts the 5S rRNA. Binds to the 5S rRNA independently of L5 and L18.

Its function is as follows. This is one of the proteins that binds to the 5S RNA in the ribosome where it forms part of the central protuberance. In Chlorobium luteolum (strain DSM 273 / BCRC 81028 / 2530) (Pelodictyon luteolum), this protein is Large ribosomal subunit protein bL25.